The primary structure comprises 329 residues: GTP 3',8-cyclase (329 aa).

In terms of domain architecture, Radical SAM core spans 8–234 (AFARKFYYLR…QLRQRSDGPA (227 aa)). GTP is bound at residue arginine 17. Cysteine 24 and cysteine 28 together coordinate [4Fe-4S] cluster. An S-adenosyl-L-methionine-binding site is contributed by tyrosine 30. Residue cysteine 31 coordinates [4Fe-4S] cluster. Residue arginine 68 participates in GTP binding. Residue glycine 72 coordinates S-adenosyl-L-methionine. Threonine 99 contacts GTP. Serine 123 provides a ligand contact to S-adenosyl-L-methionine. Lysine 160 is a GTP binding site. S-adenosyl-L-methionine is bound at residue methionine 194. 2 residues coordinate [4Fe-4S] cluster: cysteine 257 and cysteine 260. Position 262-264 (262-264 (RLR)) interacts with GTP. Cysteine 274 contacts [4Fe-4S] cluster.

The protein belongs to the radical SAM superfamily. MoaA family. In terms of assembly, monomer and homodimer. [4Fe-4S] cluster serves as cofactor.

It catalyses the reaction GTP + AH2 + S-adenosyl-L-methionine = (8S)-3',8-cyclo-7,8-dihydroguanosine 5'-triphosphate + 5'-deoxyadenosine + L-methionine + A + H(+). It participates in cofactor biosynthesis; molybdopterin biosynthesis. Functionally, catalyzes the cyclization of GTP to (8S)-3',8-cyclo-7,8-dihydroguanosine 5'-triphosphate. The polypeptide is GTP 3',8-cyclase (Escherichia fergusonii (strain ATCC 35469 / DSM 13698 / CCUG 18766 / IAM 14443 / JCM 21226 / LMG 7866 / NBRC 102419 / NCTC 12128 / CDC 0568-73)).